Consider the following 423-residue polypeptide: Galactosylceramide sulfotransferase (423 aa).

The Cytoplasmic segment spans residues 1–14 (MPLPQKKRWESMAK). A helical; Signal-anchor for type II membrane protein membrane pass occupies residues 15 to 35 (GLVLGALFTSFLLLLYSYAVP). Over 36–423 (PLYTGLASTT…WKFIRDFLRW (388 aa)) the chain is Lumenal. The tract at residues 48–70 (GAAPCSPAPREPEAPTSANGSAG) is disordered. N-linked (GlcNAc...) asparagine glycans are attached at residues asparagine 66, asparagine 156, and asparagine 312.

It belongs to the galactose-3-O-sulfotransferase family.

It is found in the golgi apparatus membrane. It carries out the reaction a beta-D-galactosyl-(1&lt;-&gt;1')-N-acylsphing-4-enine + 3'-phosphoadenylyl sulfate = an N-acyl-1-beta-D-(3-O-sulfo)-galactosyl-sphing-4-enine + adenosine 3',5'-bisphosphate + H(+). The enzyme catalyses a 1-O-alkyl-2-acyl-3-O-(beta-D-galactosyl)-sn-glycerol + 3'-phosphoadenylyl sulfate = a 1-O-alkyl-2-acyl-3-(beta-D-3-sulfogalactosyl)-sn-glycerol + adenosine 3',5'-bisphosphate + H(+). It catalyses the reaction a beta-D-Gal-(1&lt;-&gt;1')-ceramide + 3'-phosphoadenylyl sulfate = 1-(3-O-sulfo-beta-D-galactosyl)-ceramide + adenosine 3',5'-bisphosphate + H(+). The catalysed reaction is a 1,2-diacyl-3-O-(beta-D-galactosyl)-sn-glycerol + 3'-phosphoadenylyl sulfate = 1,2-diacyl-3-(3-O-sulfo-beta-D-galactosyl)-sn-glycerol + adenosine 3',5'-bisphosphate + H(+). It carries out the reaction a beta-D-Gal-(1-&gt;4)-beta-D-Glc-(1&lt;-&gt;1)-Cer(d18:1(4E)) + 3'-phosphoadenylyl sulfate = beta-D-3-sulfogalactosyl-(1-&gt;4)-beta-D-glucosyl-(1&lt;-&gt;1')-N-acylsphing-4-enine + adenosine 3',5'-bisphosphate + H(+). Its pathway is lipid metabolism; sphingolipid metabolism. Its function is as follows. Catalyzes the transfer of a sulfate group to position 3 of non-reducing beta-galactosyl residues in glycerolipids and sphingolipids, therefore participates in the biosynthesis of sulfoglycolipids. Catalyzes the synthesis of galactosylceramide sulfate (sulfatide), a major lipid component of the myelin sheath and of monogalactosylalkylacylglycerol sulfate (seminolipid), present in spermatocytes. Seems to prefer beta-glycosides at the non-reducing termini of sugar chains attached to a lipid moiety. Also acts on lactosylceramide, galactosyl 1-alkyl-2-sn-glycerol and galactosyl diacylglycerol (in vitro). The chain is Galactosylceramide sulfotransferase from Bos taurus (Bovine).